The sequence spans 367 residues: tRNA pseudouridine synthase D (367 aa).

Asp-78 serves as the catalytic Nucleophile. The 148-residue stretch at 153-300 (GVPNYFGEQR…KQERRRIRLT (148 aa)) folds into the TRUD domain.

Belongs to the pseudouridine synthase TruD family.

It catalyses the reaction uridine(13) in tRNA = pseudouridine(13) in tRNA. Responsible for synthesis of pseudouridine from uracil-13 in transfer RNAs. In Colwellia psychrerythraea (strain 34H / ATCC BAA-681) (Vibrio psychroerythus), this protein is tRNA pseudouridine synthase D.